Here is a 362-residue protein sequence, read N- to C-terminus: Outer envelope protein 39, chloroplastic (362 aa).

It belongs to the OEP80 (TC 1.B.33.2) family. In terms of tissue distribution, expressed in germinating seeds. Expressed in the vasculature of roots, cotyledons and leaves.

It localises to the plastid. It is found in the chloroplast outer membrane. Beta-barrel pore-forming protein which possesses voltage-dependent channel activity. Required for proper plastid development. Involved in the maintenance of metabolic homeostasis of full-grown plants. This Arabidopsis thaliana (Mouse-ear cress) protein is Outer envelope protein 39, chloroplastic.